We begin with the raw amino-acid sequence, 443 residues long: Glutamate--tRNA ligase 1 (443 aa).

The short motif at 8 to 18 is the 'HIGH' region element; sequence PSPTGRLHVGN. Residues 239-243 carry the 'KMSKS' region motif; that stretch reads KLSKR. K242 serves as a coordination point for ATP.

The protein belongs to the class-I aminoacyl-tRNA synthetase family. Glutamate--tRNA ligase type 1 subfamily. Monomer.

Its subcellular location is the cytoplasm. It carries out the reaction tRNA(Glu) + L-glutamate + ATP = L-glutamyl-tRNA(Glu) + AMP + diphosphate. Its function is as follows. Catalyzes the attachment of glutamate to tRNA(Glu) in a two-step reaction: glutamate is first activated by ATP to form Glu-AMP and then transferred to the acceptor end of tRNA(Glu). The protein is Glutamate--tRNA ligase 1 of Rhizorhabdus wittichii (strain DSM 6014 / CCUG 31198 / JCM 15750 / NBRC 105917 / EY 4224 / RW1) (Sphingomonas wittichii).